The primary structure comprises 114 residues: uncharacterized protein (114 aa).

Residue C10 is part of the active site.

It belongs to the ArsC family.

This is an uncharacterized protein from Haemophilus influenzae (strain ATCC 51907 / DSM 11121 / KW20 / Rd).